The sequence spans 160 residues: Major allergen Pru av 1 (160 aa).

The protein belongs to the BetVI family.

The sequence is that of Major allergen Pru av 1 (PRUA1) from Prunus avium (Cherry).